The sequence spans 272 residues: 4-hydroxy-tetrahydrodipicolinate reductase (272 aa).

Residues 11-16 (GVSGRM) and Glu37 each bind NAD(+). An NADP(+)-binding site is contributed by Arg38. NAD(+)-binding positions include 101 to 103 (GTT) and 125 to 128 (AGNM). The active-site Proton donor/acceptor is the His158. His159 serves as a coordination point for (S)-2,3,4,5-tetrahydrodipicolinate. Lys162 functions as the Proton donor in the catalytic mechanism. 168 to 169 (GT) is a binding site for (S)-2,3,4,5-tetrahydrodipicolinate.

This sequence belongs to the DapB family.

It localises to the cytoplasm. The enzyme catalyses (S)-2,3,4,5-tetrahydrodipicolinate + NAD(+) + H2O = (2S,4S)-4-hydroxy-2,3,4,5-tetrahydrodipicolinate + NADH + H(+). It catalyses the reaction (S)-2,3,4,5-tetrahydrodipicolinate + NADP(+) + H2O = (2S,4S)-4-hydroxy-2,3,4,5-tetrahydrodipicolinate + NADPH + H(+). It participates in amino-acid biosynthesis; L-lysine biosynthesis via DAP pathway; (S)-tetrahydrodipicolinate from L-aspartate: step 4/4. Catalyzes the conversion of 4-hydroxy-tetrahydrodipicolinate (HTPA) to tetrahydrodipicolinate. The chain is 4-hydroxy-tetrahydrodipicolinate reductase from Roseobacter denitrificans (strain ATCC 33942 / OCh 114) (Erythrobacter sp. (strain OCh 114)).